The sequence spans 159 residues: Nucleotide-binding protein Avin_13410 (159 aa).

Belongs to the YajQ family.

Functionally, nucleotide-binding protein. The polypeptide is Nucleotide-binding protein Avin_13410 (Azotobacter vinelandii (strain DJ / ATCC BAA-1303)).